The following is a 1686-amino-acid chain: Thrombospondin type-1 domain-containing protein 7A (1686 aa).

The N-terminal stretch at 1–36 (MGLASRAPGKGGTSAGALASLFRVALLFFGLWDVQT) is a signal peptide. Topologically, residues 37–1635 (QTVANTRPTY…FGPDGKLKTW (1599 aa)) are extracellular. TSP type-1 domains follow at residues 44–103 (PTYI…RVCD), 107–181 (ELYD…IPCP), and 183–236 (DCVV…GKCE). N-linked (GlcNAc...) asparagine glycosylation occurs at Asn223. The interval 257 to 321 (IRQARDTGEA…EKKRMRDPET (65 aa)) is disordered. Basic and acidic residues-rich tracts occupy residues 259–272 (QARD…PKAE) and 294–321 (EKKE…DPET). TSP type-1 domains follow at residues 385-441 (DCEV…SPQG), 448-535 (VVYN…IPCP), 537-596 (ECEV…PSCY), 656-717 (DCVL…HPCT), 718-797 (VYHW…LPCK), 799-859 (DCVV…SVCP), 860-932 (GYRW…LPCQ), 934-985 (DCQL…QYCP), 988-1061 (KYNA…IPCP), 1063-1123 (DCKL…SDCS), 1124-1191 (QYVW…LPCP), 1193-1247 (DCVL…SNCF), 1248-1311 (HYSY…VECP), 1313-1368 (NCQL…KPCF), 1369-1439 (SWRY…VPCP), and 1441-1502 (ECYL…GQCY). Cystine bridges form between Cys460–Cys530, Cys480–Cys534, and Cys491–Cys519. Asn475 is a glycosylation site (N-linked (GlcNAc...) asparagine). Asn525 is a glycosylation site (N-linked (GlcNAc...) asparagine). Cystine bridges form between Cys657/Cys699 and Cys668/Cys672. N-linked (GlcNAc...) asparagine glycosylation is present at Asn701. Cystine bridges form between Cys711–Cys716, Cys729–Cys792, Cys756–Cys796, Cys767–Cys780, Cys800–Cys842, Cys811–Cys815, and Cys852–Cys858. An N-linked (GlcNAc...) asparagine glycan is attached at Asn739. N-linked (GlcNAc...) asparagine glycosylation is present at Asn996. 6 disulfide bridges follow: Cys1000–Cys1056, Cys1022–Cys1060, Cys1033–Cys1046, Cys1064–Cys1101, Cys1075–Cys1079, and Cys1118–Cys1122. Asn1071 carries N-linked (GlcNAc...) asparagine glycosylation. Asn1212 carries N-linked (GlcNAc...) asparagine glycosylation. Cys1240 and Cys1246 are oxidised to a cystine. Residue Asn1252 is glycosylated (N-linked (GlcNAc...) asparagine). Disulfide bonds link Cys1259/Cys1306, Cys1267/Cys1310, Cys1278/Cys1291, Cys1314/Cys1352, Cys1325/Cys1329, Cys1362/Cys1367, Cys1378/Cys1434, Cys1385/Cys1438, Cys1396/Cys1415, Cys1442/Cys1486, Cys1453/Cys1457, and Cys1496/Cys1501. Asn1303 is a glycosylation site (N-linked (GlcNAc...) asparagine). Asn1393 carries an N-linked (GlcNAc...) asparagine glycan. N-linked (GlcNAc...) asparagine glycosylation is present at Asn1527. A helical membrane pass occupies residues 1636 to 1656 (VYGVAAGAFVLLVFIVSMTYL). Over 1657–1686 (ACKKPKKPQRRQMNNRLKPLTLAYDGDADM) the chain is Cytoplasmic.

In terms of processing, extensively N-glycosylated.

It is found in the cell membrane. The protein resides in the cell projection. Required for normal sprouting angiogenesis and normal embryonic development of intersegmental vessels (ISV). Required for normal function of the glomerular filtration barrier. Required for normal axon outgrowth on embryonic motor neurons at the level of the horizontal myoseptum. Required for normal expression of notch1b, suggesting that its functions in angiogenesis and neuron outgrowth are due to decreased expression of notch1b. Plays a role in actin cytoskeleton rearrangement. This chain is Thrombospondin type-1 domain-containing protein 7A, found in Danio rerio (Zebrafish).